Reading from the N-terminus, the 267-residue chain is NAD kinase 2 (267 aa).

Asp-52 serves as the catalytic Proton acceptor. NAD(+)-binding positions include 52 to 53 (DA), 124 to 125 (NE), Arg-151, Asp-153, 164 to 169 (TAYNKS), and Ala-188.

This sequence belongs to the NAD kinase family. The cofactor is a divalent metal cation.

The protein localises to the cytoplasm. It catalyses the reaction NAD(+) + ATP = ADP + NADP(+) + H(+). Its function is as follows. Involved in the regulation of the intracellular balance of NAD and NADP, and is a key enzyme in the biosynthesis of NADP. Catalyzes specifically the phosphorylation on 2'-hydroxyl of the adenosine moiety of NAD to yield NADP. In Bacillus anthracis, this protein is NAD kinase 2.